The chain runs to 403 residues: Argininosuccinate synthase (403 aa).

ATP-binding positions include 13 to 21 and Ala-40; that span reads AYSGGLDTS. Residues Tyr-91 and Ser-96 each contribute to the L-citrulline site. An ATP-binding site is contributed by Gly-121. Residues Thr-123, Asn-127, and Asp-128 each contribute to the L-aspartate site. L-citrulline is bound at residue Asn-127. 5 residues coordinate L-citrulline: Arg-131, Ser-180, Ser-189, Glu-265, and Tyr-277.

Belongs to the argininosuccinate synthase family. Type 1 subfamily. As to quaternary structure, homotetramer.

The protein resides in the cytoplasm. It catalyses the reaction L-citrulline + L-aspartate + ATP = 2-(N(omega)-L-arginino)succinate + AMP + diphosphate + H(+). It functions in the pathway amino-acid biosynthesis; L-arginine biosynthesis; L-arginine from L-ornithine and carbamoyl phosphate: step 2/3. In Leptospira interrogans serogroup Icterohaemorrhagiae serovar copenhageni (strain Fiocruz L1-130), this protein is Argininosuccinate synthase.